We begin with the raw amino-acid sequence, 122 residues long: Prefoldin subunit 1 (122 aa).

Alanine 2 is subject to N-acetylalanine.

It belongs to the prefoldin subunit beta family. As to quaternary structure, heterohexamer of two PFD-alpha type and four PFD-beta type subunits.

Functionally, binds specifically to cytosolic chaperonin (c-CPN) and transfers target proteins to it. Binds to nascent polypeptide chain and promotes folding in an environment in which there are many competing pathways for nonnative proteins. The protein is Prefoldin subunit 1 (PFDN1) of Bos taurus (Bovine).